The sequence spans 471 residues: MMVFSSTFIFLILELVVLCEASVHTIQIKDKHFVDTVTGKPFFIKGVDYQPGGSSDVSEKQDPLSNPDACARDILLFQELGINTVRIYSINPDLNHDACMTMLAMAGIYLILDVNSPLQNQHLNRYEPWTTYNEVYLEHVFKVVEQFSHYNNTLGFFAGNEIVNDKRSAQYSPAYVKELIGTMKNYISAHSPRTIPVGYSAADDLNYRVSLSEYLECKDDDKPENSVDFYGVNSYQWCGQQTMQTSGYDTLVDAYRSYSKPVFFSEFGCNKVLPRQFQEIGYLFSEEMYSVFCGGLVYEFSQEDNNYGLVEYQEDDSVQLLADFEKLKSHYQNIEFPSMKTLKETVQMEETPSCAEDYENLKIESKIAKNLGSSLIKKGVKVEKGKYIDIHEDQLSTNVTILDKHGDRWNGPKKIEIRQSLTLADLEGEEQEDADEDKDDLKRKHRNSASISGPLLPLGLCLLFFTFSLFF.

The N-terminal stretch at 1–21 (MMVFSSTFIFLILELVVLCEA) is a signal peptide. The cysteines at positions 70 and 99 are disulfide-linked. A (1,3-beta-D-glucosyl)n-binding site is contributed by Tyr-88. Asn-151 carries an N-linked (GlcNAc...) asparagine glycan. Residues Asn-160, Glu-161, Asp-203, and Arg-208 each contribute to the (1,3-beta-D-glucosyl)n site. The Proton donor role is filled by Glu-161. Disulfide bonds link Cys-217–Cys-354 and Cys-238–Cys-269. Glu-266 (nucleophile) is an active-site residue. Tyr-298 contributes to the (1,3-beta-D-glucosyl)n binding site. N-linked (GlcNAc...) asparagine glycosylation is present at Asn-398. Asn-447 carries GPI-anchor amidated asparagine lipidation. A propeptide spans 448 to 471 (SASISGPLLPLGLCLLFFTFSLFF) (removed in mature form).

Belongs to the glycosyl hydrolase 72 family.

It is found in the cell membrane. In terms of biological role, splits internally a 1,3-beta-glucan molecule and transfers the newly generated reducing end (the donor) to the non-reducing end of another 1,3-beta-glucan molecule (the acceptor) forming a 1,3-beta linkage, resulting in the elongation of 1,3-beta-glucan chains in the cell wall. Involved in spore wall assembly. The polypeptide is 1,3-beta-glucanosyltransferase GAS4 (GAS4) (Saccharomyces cerevisiae (strain ATCC 204508 / S288c) (Baker's yeast)).